The following is a 417-amino-acid chain: NADH-quinone oxidoreductase subunit D (417 aa).

The protein belongs to the complex I 49 kDa subunit family. As to quaternary structure, NDH-1 is composed of 14 different subunits. Subunits NuoB, C, D, E, F, and G constitute the peripheral sector of the complex.

Its subcellular location is the cell inner membrane. It carries out the reaction a quinone + NADH + 5 H(+)(in) = a quinol + NAD(+) + 4 H(+)(out). NDH-1 shuttles electrons from NADH, via FMN and iron-sulfur (Fe-S) centers, to quinones in the respiratory chain. The immediate electron acceptor for the enzyme in this species is believed to be ubiquinone. Couples the redox reaction to proton translocation (for every two electrons transferred, four hydrogen ions are translocated across the cytoplasmic membrane), and thus conserves the redox energy in a proton gradient. The polypeptide is NADH-quinone oxidoreductase subunit D (Nitrosomonas europaea (strain ATCC 19718 / CIP 103999 / KCTC 2705 / NBRC 14298)).